Here is a 755-residue protein sequence, read N- to C-terminus: Putative two-component response regulator-like APRR6 (755 aa).

Residues 14–128 (SILLIDHDTA…DIKNMWQHVF (115 aa)) enclose the Response regulatory domain.

Belongs to the ARR-like family.

It is found in the nucleus. The protein is Putative two-component response regulator-like APRR6 (APRR6) of Arabidopsis thaliana (Mouse-ear cress).